The chain runs to 30 residues: Scolopendra 20528.11 Da toxin (30 aa).

Belongs to the CRISP family. Venom allergen 5-like subfamily. Post-translationally, contains 3 disulfide bonds. Expressed by the venom gland.

It localises to the secreted. In Scolopendra angulata (Barbados giant red centipede), this protein is Scolopendra 20528.11 Da toxin.